We begin with the raw amino-acid sequence, 422 residues long: 5-hydroxytryptamine receptor 1A (422 aa).

The segment at 1 to 23 is disordered; it reads MDVLSPGQGNNTTSPPAPFETGG. The Extracellular segment spans residues 1–38; it reads MDVLSPGQGNNTTSPPAPFETGGNTTGISDVTFSYQVI. N-linked (GlcNAc...) asparagine glycans are attached at residues Asn-10, Asn-11, and Asn-24. A helical membrane pass occupies residues 39–59; sequence TSLLLGTLIFCAVLGNACVVA. Residues 60–73 lie on the Cytoplasmic side of the membrane; it reads AIALERSLQNVANY. A helical membrane pass occupies residues 74-98; the sequence is LIGSLAVTDLMVSVLVLPMAALYQV. Topologically, residues 99-107 are extracellular; it reads LNKWTLGQV. Residues 108-132 traverse the membrane as a helical segment; sequence TCDLFIALDVLCCTSSILHLCAIAL. Cys-109 and Cys-187 are disulfide-bonded. Positions 116 and 120 each coordinate serotonin. Positions 133–135 match the DRY motif; important for ligand-induced conformation changes motif; sequence DRY. The Cytoplasmic segment spans residues 133-152; it reads DRYWAITDPIDYVNKRTPRR. Residues 153–174 form a helical membrane-spanning segment; it reads AAALISLTWLIGFLISIPPMLG. The Extracellular portion of the chain corresponds to 175-193; it reads WRTPEDRSDPDACTISKDH. A helical transmembrane segment spans residues 194–216; it reads GYTIYSTFGAFYIPLLLMLVLYG. Residues 217 to 346 are Cytoplasmic-facing; sequence RIFRAARFRI…LARERKTVKT (130 aa). The disordered stretch occupies residues 235-263; the sequence is KTGADTHHGASPAPQPKKSVNGESGSRNW. 4 residues coordinate 1D-myo-inositol 4-phosphate: Thr-314, Lys-345, Thr-346, and Gly-352. Residues 347 to 370 traverse the membrane as a helical segment; sequence LGIIMGTFILCWLPFFIVALVLPF. Topologically, residues 371–378 are extracellular; that stretch reads CESSCHMP. The helical transmembrane segment at 379–403 threads the bilayer; that stretch reads TLLGAIINWLGYSNSLLNPVIYAYF. Positions 396 to 400 match the NPxxY motif; important for ligand-induced conformation changes and signaling motif; it reads NPVIY. Residues Phe-403, Asn-404, and Lys-405 each coordinate 1D-myo-inositol 4-phosphate. Topologically, residues 404 to 422 are cytoplasmic; the sequence is NKDFQNAFKKIIKCKFCRQ.

It belongs to the G-protein coupled receptor 1 family. 5-hydroxytryptamine receptor subfamily. HTR1A sub-subfamily. Heterodimer; heterodimerizes with GPER1. Interacts with YIF1B. Interacts with GPR39 and GALR1.

It is found in the cell membrane. It localises to the cell projection. The protein localises to the dendrite. With respect to regulation, G-protein coupled receptor activity is regulated by lipids: phosphatidylinositol 4-phosphate increases HTR1A-mediated activity. Functionally, G-protein coupled receptor for 5-hydroxytryptamine (serotonin). Also functions as a receptor for various drugs and psychoactive substances. Ligand binding causes a conformation change that triggers signaling via guanine nucleotide-binding proteins (G proteins) and modulates the activity of downstream effectors, such as adenylate cyclase. HTR1A is coupled to G(i)/G(o) G alpha proteins and mediates inhibitory neurotransmission: signaling inhibits adenylate cyclase activity and activates a phosphatidylinositol-calcium second messenger system that regulates the release of Ca(2+) ions from intracellular stores. Beta-arrestin family members regulate signaling by mediating both receptor desensitization and resensitization processes. The chain is 5-hydroxytryptamine receptor 1A (HTR1A) from Pongo pygmaeus (Bornean orangutan).